Here is an 87-residue protein sequence, read N- to C-terminus: Acylphosphatase (87 aa).

Residues 2-87 (RLTALVSGTV…ATGLRDFHVY (86 aa)) enclose the Acylphosphatase-like domain. Residues Arg-17 and Asn-35 contribute to the active site.

The protein belongs to the acylphosphatase family.

It catalyses the reaction an acyl phosphate + H2O = a carboxylate + phosphate + H(+). In Deinococcus geothermalis (strain DSM 11300 / CIP 105573 / AG-3a), this protein is Acylphosphatase (acyP).